A 224-amino-acid polypeptide reads, in one-letter code: Fibronectin type III domain-containing protein 9 (224 aa).

Residues 1 to 101 (MNIEVGNISY…FHTLDKSPLA (101 aa)) form the Fibronectin type-III domain. The helical transmembrane segment at 113–133 (LWVLMAILLACFTAVLAFICL) threads the bilayer. Residues 175–224 (LQGLPLVEMPRKNSRDGAELDPEANQDAPDAGALQRGGGDPPAILPHCGE) form a disordered region. Positions 183–192 (MPRKNSRDGA) are enriched in basic and acidic residues.

It localises to the membrane. In Homo sapiens (Human), this protein is Fibronectin type III domain-containing protein 9 (FNDC9).